A 184-amino-acid polypeptide reads, in one-letter code: uncharacterized protein (184 aa).

A disordered region spans residues 1 to 24 (MGISDQINSNLSSQSPFTVSTNPS).

This is an uncharacterized protein from Dictyostelium discoideum (Social amoeba).